The chain runs to 61 residues: Beta-insect depressant toxin BotIT5 (61 aa).

One can recognise an LCN-type CS-alpha/beta domain in the interval 1-61 (DGYIRKRDGC…TWKSETNTCG (61 aa)). Intrachain disulfides connect Cys-10/Cys-60, Cys-14/Cys-35, Cys-21/Cys-42, and Cys-25/Cys-44. Gly-61 carries the post-translational modification Glycine amide.

It belongs to the long (4 C-C) scorpion toxin superfamily. Sodium channel inhibitor family. Beta subfamily. Expressed by the venom gland.

It localises to the secreted. Depressant insect beta-toxins cause a transient contraction paralysis followed by a slow flaccid paralysis. They bind voltage-independently at site-4 of sodium channels (Nav) and shift the voltage of activation toward more negative potentials thereby affecting sodium channel activation and promoting spontaneous and repetitive firing. This toxin is active only on insects. The chain is Beta-insect depressant toxin BotIT5 from Buthus occitanus tunetanus (Common European scorpion).